Consider the following 132-residue polypeptide: Intraflagellar transport protein 20 homolog B (132 aa).

Positions 87–112 form a coiled coil; sequence EAQQQQLYALIAEKKMQLERYRIEYD.

The protein localises to the golgi apparatus. It localises to the cis-Golgi network. It is found in the cytoplasm. Its subcellular location is the cytoskeleton. The protein resides in the microtubule organizing center. The protein localises to the centrosome. It localises to the centriole. It is found in the cell projection. Its subcellular location is the cilium. Its function is as follows. Involved in ciliary process assembly. May play a role in the trafficking of ciliary membrane proteins from the Golgi complex to the cilium. Regulates the platelet-derived growth factor receptor-alpha (PDGFRA) signaling pathway. Plays an important role in spermatogenesis, particularly spermiogenesis, when germ cells form flagella. The sequence is that of Intraflagellar transport protein 20 homolog B (ift20-b) from Xenopus laevis (African clawed frog).